A 514-amino-acid polypeptide reads, in one-letter code: Ammonium transporter 1 member 2 (514 aa).

The next 11 helical transmembrane spans lie at Leu-56–Gly-76, Val-91–Gly-111, Phe-140–Ala-160, Phe-165–His-185, Phe-212–Val-232, Val-257–Leu-277, Gly-291–Thr-313, Ile-328–Val-348, Trp-351–Ala-371, Leu-380–Phe-400, and Ile-431–Gly-451. Thr-472 bears the Phosphothreonine mark.

It belongs to the ammonia transporter channel (TC 1.A.11.2) family. High expression in root.

Its subcellular location is the membrane. Its function is as follows. Ammonium transporter probably involved in ammonium uptake from the soil. This Arabidopsis thaliana (Mouse-ear cress) protein is Ammonium transporter 1 member 2 (AMT1-2).